Consider the following 382-residue polypeptide: tRNA(Met) cytidine acetate ligase (382 aa).

Residues 7 to 20, Gly100, Asn153, and Arg178 each bind ATP; that span reads ITEY…HVYH.

The protein belongs to the TmcAL family.

It is found in the cytoplasm. The catalysed reaction is cytidine(34) in elongator tRNA(Met) + acetate + ATP = N(4)-acetylcytidine(34) in elongator tRNA(Met) + AMP + diphosphate. Catalyzes the formation of N(4)-acetylcytidine (ac(4)C) at the wobble position of elongator tRNA(Met), using acetate and ATP as substrates. First activates an acetate ion to form acetyladenylate (Ac-AMP) and then transfers the acetyl group to tRNA to form ac(4)C34. This is tRNA(Met) cytidine acetate ligase from Staphylococcus carnosus (strain TM300).